The primary structure comprises 188 residues: Elongation factor P (188 aa).

N6-(3,6-diaminohexanoyl)-5-hydroxylysine is present on K34.

The protein belongs to the elongation factor P family. May be beta-lysylated on the epsilon-amino group of Lys-34 by the combined action of EpmA and EpmB, and then hydroxylated on the C5 position of the same residue by EpmC (if this protein is present). Lysylation is critical for the stimulatory effect of EF-P on peptide-bond formation. The lysylation moiety may extend toward the peptidyltransferase center and stabilize the terminal 3-CCA end of the tRNA. Hydroxylation of the C5 position on Lys-34 may allow additional potential stabilizing hydrogen-bond interactions with the P-tRNA.

It is found in the cytoplasm. The protein operates within protein biosynthesis; polypeptide chain elongation. Its function is as follows. Involved in peptide bond synthesis. Alleviates ribosome stalling that occurs when 3 or more consecutive Pro residues or the sequence PPG is present in a protein, possibly by augmenting the peptidyl transferase activity of the ribosome. Modification of Lys-34 is required for alleviation. The chain is Elongation factor P from Coxiella burnetii (strain CbuG_Q212) (Coxiella burnetii (strain Q212)).